Here is a 364-residue protein sequence, read N- to C-terminus: tRNA/tmRNA (uracil-C(5))-methyltransferase (364 aa).

Glutamine 188, tyrosine 216, asparagine 221, glutamate 237, and aspartate 297 together coordinate S-adenosyl-L-methionine. Cysteine 322 acts as the Nucleophile in catalysis. Glutamate 356 functions as the Proton acceptor in the catalytic mechanism.

Belongs to the class I-like SAM-binding methyltransferase superfamily. RNA M5U methyltransferase family. TrmA subfamily.

The enzyme catalyses uridine(54) in tRNA + S-adenosyl-L-methionine = 5-methyluridine(54) in tRNA + S-adenosyl-L-homocysteine + H(+). The catalysed reaction is uridine(341) in tmRNA + S-adenosyl-L-methionine = 5-methyluridine(341) in tmRNA + S-adenosyl-L-homocysteine + H(+). Functionally, dual-specificity methyltransferase that catalyzes the formation of 5-methyluridine at position 54 (m5U54) in all tRNAs, and that of position 341 (m5U341) in tmRNA (transfer-mRNA). The polypeptide is tRNA/tmRNA (uracil-C(5))-methyltransferase (Colwellia psychrerythraea (strain 34H / ATCC BAA-681) (Vibrio psychroerythus)).